Here is a 389-residue protein sequence, read N- to C-terminus: Inner membrane transport protein YdhP (389 aa).

Over 1 to 6 (MKINYP) the chain is Cytoplasmic. Residues 7-27 (LLALAIGAFGIGTTEFSPMGL) traverse the membrane as a helical segment. The Periplasmic segment spans residues 28-43 (LPVIARGVDVSIPAAG). A helical transmembrane segment spans residues 44–64 (MLISAYAVGVMVGAPLMTLLL). The Cytoplasmic portion of the chain corresponds to 65 to 70 (SHRARR). The helical transmembrane segment at 71-91 (SALIFLMAIFTLGNVLSAIAP) threads the bilayer. At 92-100 (DYMTLMLSR) the chain is on the periplasmic side. A helical transmembrane segment spans residues 101-121 (ILTSLNHGAFFGLGSVVAASV). Over 122-130 (VPKHKQASA) the chain is Cytoplasmic. Residues 131-151 (VATMFMGLTLANIGGVPAATW) traverse the membrane as a helical segment. The Periplasmic segment spans residues 152-159 (LGETIGWR). The helical transmembrane segment at 160-180 (MSFLATAGLGVISMVSLFFSL) threads the bilayer. Residues 181–203 (PKGGAGARPEVKKELAVLMRPQV) are Cytoplasmic-facing. The helical transmembrane segment at 204-224 (LSALLTTVLGAGAMFTLYTYI) threads the bilayer. Over 225–236 (SPVLQSITHATP) the chain is Periplasmic. A helical transmembrane segment spans residues 237 to 257 (VFVTAMLVLIGVGFSIGNYLG). Residues 258 to 266 (GKLADRSVN) are Cytoplasmic-facing. A helical membrane pass occupies residues 267-287 (GTLKGFLLLLMVIMLAIPFLA). The Periplasmic segment spans residues 288 to 290 (RNK). The chain crosses the membrane as a helical span at residues 291 to 311 (FGAAISMAVWGAATFAVVPPL). The Cytoplasmic segment spans residues 312–330 (QMRVMRVASEAPGLSSSVN). Residues 331 to 351 (IGAFNLGNALGAAAGGAVISA) form a helical membrane-spanning segment. The Periplasmic portion of the chain corresponds to 352–356 (GLGYS). The chain crosses the membrane as a helical span at residues 357-377 (FVPVMGAIVAGLALLLVFMSA). Residues 378–389 (RKQPETVCVANS) lie on the Cytoplasmic side of the membrane.

This sequence belongs to the major facilitator superfamily.

The protein resides in the cell inner membrane. This Escherichia coli O157:H7 protein is Inner membrane transport protein YdhP (ydhP).